The sequence spans 566 residues: UvrABC system protein C (566 aa).

The GIY-YIG domain occupies 16 to 93 (EKPGVYLFKK…IQQYKPRYNV (78 aa)). The UVR domain occupies 199-234 (AEVLPKLYEKIEEFSKELMFEKCAHIRDQIIALENL).

This sequence belongs to the UvrC family. Interacts with UvrB in an incision complex.

The protein resides in the cytoplasm. In terms of biological role, the UvrABC repair system catalyzes the recognition and processing of DNA lesions. UvrC both incises the 5' and 3' sides of the lesion. The N-terminal half is responsible for the 3' incision and the C-terminal half is responsible for the 5' incision. This is UvrABC system protein C from Aquifex aeolicus (strain VF5).